The sequence spans 369 residues: Homoserine O-succinyltransferase (369 aa).

The segment at 90–93 is important for substrate specificity; the sequence is GISA. Residues 107 to 353 form the AB hydrolase-1 domain; the sequence is WWSGAVGVRA…YGHDAFLKED (247 aa). Serine 175 (nucleophile) is an active-site residue. Arginine 236 is a binding site for substrate. Residues aspartate 316 and histidine 346 contribute to the active site. Position 347 (aspartate 347) interacts with substrate.

It belongs to the AB hydrolase superfamily. MetX family. Homodimer.

The protein resides in the cytoplasm. It carries out the reaction L-homoserine + succinyl-CoA = O-succinyl-L-homoserine + CoA. Its pathway is amino-acid biosynthesis; L-methionine biosynthesis via de novo pathway; O-succinyl-L-homoserine from L-homoserine: step 1/1. Its function is as follows. Transfers a succinyl group from succinyl-CoA to L-homoserine, forming succinyl-L-homoserine. The sequence is that of Homoserine O-succinyltransferase from Brevundimonas diminuta (strain ATCC 11568 / DSM 7234 / NBRC 12697 / NCIMB 9393 / NCTC 8545).